Consider the following 1182-residue polypeptide: Rho GTPase-activating protein 20 (1182 aa).

Positions 1–40 are disordered; the sequence is MEAMSPQQDALGAQPGRSSSLTGMSRIAGGPGTKKKMKTL. S46 carries the post-translational modification Phosphoserine. The 102-residue stretch at 86–187 folds into the PH domain; it reads LLIDGPVELK…SLLQRYIALE (102 aa). Residues 194-283 form the Ras-associating domain; the sequence is KSIPLKIFAK…TALLTQGSKD (90 aa). The Rho-GAP domain maps to 365-551; it reads VSLPDICEND…FLIENCCRIF (187 aa). 2 positions are modified to phosphoserine: S704 and S730. 4 disordered regions span residues 744-791, 932-953, 981-1009, and 1140-1182; these read KQTQ…IQET, ASYS…SSQD, QRKQ…GQAS, and EESG…GDRH. A compositionally biased stretch (polar residues) spans 757 to 775; that stretch reads FKQSSVTGTDVSKRNTANE. The segment covering 933-953 has biased composition (low complexity); sequence SYSSLSSPGTSPSGSSVSSQD.

In terms of tissue distribution, highest expression is found in testis. Ubiquitously expressed in extragonadal tissues.

In terms of biological role, GTPase activator for the Rho-type GTPases by converting them to an inactive GDP-bound state. The polypeptide is Rho GTPase-activating protein 20 (Arhgap20) (Rattus norvegicus (Rat)).